The primary structure comprises 208 residues: Protein-L-isoaspartate O-methyltransferase (208 aa).

Residue S59 is part of the active site.

The protein belongs to the methyltransferase superfamily. L-isoaspartyl/D-aspartyl protein methyltransferase family.

The protein localises to the cytoplasm. It carries out the reaction [protein]-L-isoaspartate + S-adenosyl-L-methionine = [protein]-L-isoaspartate alpha-methyl ester + S-adenosyl-L-homocysteine. Its function is as follows. Catalyzes the methyl esterification of L-isoaspartyl residues in peptides and proteins that result from spontaneous decomposition of normal L-aspartyl and L-asparaginyl residues. It plays a role in the repair and/or degradation of damaged proteins. The polypeptide is Protein-L-isoaspartate O-methyltransferase (Aliivibrio fischeri (strain ATCC 700601 / ES114) (Vibrio fischeri)).